Here is a 319-residue protein sequence, read N- to C-terminus: Protease HtpX homolog (319 aa).

2 helical membrane-spanning segments follow: residues 6–26 and 28–48; these read TAMLLAFMTVLFMAVGYVIGG and GGMMIALVIAAGMNFFSYWNS. Residue His130 coordinates Zn(2+). The active site involves Glu131. His134 serves as a coordination point for Zn(2+). 2 consecutive transmembrane segments (helical) span residues 145–165 and 172–192; these read LTATLAGAISMLGNFAFFFGG and PLGFIGVLIAMIVAPLAAMLV. Residue Glu201 participates in Zn(2+) binding. The segment at 277–319 is disordered; it reads MARETSTGSTAPVRPDNAGRKSRSVPRTGWGRGGSEPPKGPWS.

It belongs to the peptidase M48B family. The cofactor is Zn(2+).

The protein localises to the cell inner membrane. This Rhizobium meliloti (strain 1021) (Ensifer meliloti) protein is Protease HtpX homolog.